Here is a 37-residue protein sequence, read N- to C-terminus: Cytochrome b6-f complex subunit 5 (37 aa).

Residues 5–25 (LLSGIVLGLVPVTIAGLFVTA) form a helical membrane-spanning segment.

This sequence belongs to the PetG family. In terms of assembly, the 4 large subunits of the cytochrome b6-f complex are cytochrome b6, subunit IV (17 kDa polypeptide, PetD), cytochrome f and the Rieske protein, while the 4 small subunits are PetG, PetL, PetM and PetN. The complex functions as a dimer.

It is found in the plastid. Its subcellular location is the chloroplast thylakoid membrane. In terms of biological role, component of the cytochrome b6-f complex, which mediates electron transfer between photosystem II (PSII) and photosystem I (PSI), cyclic electron flow around PSI, and state transitions. PetG is required for either the stability or assembly of the cytochrome b6-f complex. The polypeptide is Cytochrome b6-f complex subunit 5 (Chlorella vulgaris (Green alga)).